The chain runs to 354 residues: Replication factor C subunit 5 (354 aa).

Residues V5, S17, 43–51, and R231 contribute to the ATP site; that span reads GPNGTGKKT.

The protein belongs to the activator 1 small subunits family. As to quaternary structure, replication factor C (RFC) is a heteropentamer of subunits RFC1, RFC2, RFC3, RFC4 and RFC5 and forms a complex with POL30/PCNA in the presence of ATP. Component of the RAD24-RFC complex which consists of RAD24, RFC2, RFC3, RFC4 and RFC5 and associates with the checkpoint clamp DDC1:MEC3:RAD17 complex. Component of the ELG1-RFC complex which consists of ELG1, RFC2, RFC3, RFC4 and RFC5. Component of the CTF18-RFC complex, which consists of CTF18, CTF8, DCC1, RFC2, RFC3, RFC4 and RFC5. RFC5 interacts with ECO1.

The protein localises to the nucleus. Component of ATP-dependent clamp loader (RFC and RFC-like) complexes for DNA clamps, such as the POL30/PCNA homotrimer and the checkpoint clamp DDC1:MEC3:RAD17 complex. During a clamp loading circle, the RFC:clamp complex binds to DNA and the recognition of the double-stranded/single-stranded junction stimulates ATP hydrolysis by RFC. The complex presumably provides bipartite ATP sites in which one subunit supplies a catalytic site for hydrolysis of ATP bound to the neighboring subunit. Dissociation of RFC from the clamp leaves the clamp encircling DNA. Component of the replication factor C (RFC or activator 1) complex which loads POL30/PCNA and acts during elongation of primed DNA templates by DNA polymerase delta and epsilon. RFC has an essential but redundant activity in sister chromatid cohesion establishment. Component of the RFC-like complex CTF18-RFC which is required for efficient establishment of chromosome cohesion during S-phase and may load or unload POL30/PCNA. Component of the RFC-like RAD24-RFC complex which loads the checkpoint clamp DDC1:MEC3:RAD17 complex and is involved in DNA repair pathways. Component of the RFC-like ELG1-RFC complex which appears to have a role in DNA replication, replication fork re-start, recombination and repair. This is Replication factor C subunit 5 (RFC5) from Saccharomyces cerevisiae (strain ATCC 204508 / S288c) (Baker's yeast).